The chain runs to 602 residues: Aspartate--tRNA(Asp/Asn) ligase (602 aa).

Glu176 lines the L-aspartate pocket. Residues 200-203 (QQFK) are aspartate. L-aspartate-binding residues include Arg222 and His452. 222-224 (RDE) is an ATP binding site. Glu490 is a binding site for ATP. Arg497 contributes to the L-aspartate binding site. 542–545 (GIDR) serves as a coordination point for ATP.

It belongs to the class-II aminoacyl-tRNA synthetase family. Type 1 subfamily. As to quaternary structure, homodimer.

The protein resides in the cytoplasm. The enzyme catalyses tRNA(Asx) + L-aspartate + ATP = L-aspartyl-tRNA(Asx) + AMP + diphosphate. Its function is as follows. Aspartyl-tRNA synthetase with relaxed tRNA specificity since it is able to aspartylate not only its cognate tRNA(Asp) but also tRNA(Asn). Reaction proceeds in two steps: L-aspartate is first activated by ATP to form Asp-AMP and then transferred to the acceptor end of tRNA(Asp/Asn). This Rickettsia akari (strain Hartford) protein is Aspartate--tRNA(Asp/Asn) ligase.